Here is a 108-residue protein sequence, read N- to C-terminus: Peptidyl-prolyl cis-trans isomerase FKBP1A (108 aa).

Ser10 bears the Phosphoserine mark. The PPIase FKBP-type domain occupies 20 to 108 (GQTCVVHYTG…VFDVELLKLE (89 aa)). The residue at position 53 (Lys53) is an N6-acetyllysine; alternate. Lys53 is subject to N6-succinyllysine; alternate.

This sequence belongs to the FKBP-type PPIase family. FKBP1 subfamily. Interacts with TGFBR1; prevents TGFBR1 phosphorylation by TGFBR2 and stabilizes it in the inactive conformation. Interacts with ACVR1B and SMAD7. Identified in a complex composed of RYR1, PDE4D, PKA, FKBP1A and protein phosphatase 1 (PP1). Interacts directly with RYR2. Interacts directly with RYR3. Interacts directly with RYR1. Interacts with GLMN; rapamycin and FK506 abolish the interaction with GLMN in a dose dependent manner. Ubiquitous.

Its subcellular location is the cytoplasm. It localises to the cytosol. The protein resides in the sarcoplasmic reticulum membrane. The catalysed reaction is [protein]-peptidylproline (omega=180) = [protein]-peptidylproline (omega=0). Its activity is regulated as follows. Inhibited by both FK506 and rapamycin. In terms of biological role, keeps in an inactive conformation TGFBR1, the TGF-beta type I serine/threonine kinase receptor, preventing TGF-beta receptor activation in absence of ligand. Recruits SMAD7 to ACVR1B which prevents the association of SMAD2 and SMAD3 with the activin receptor complex, thereby blocking the activin signal. May modulate the RYR1 calcium channel activity. PPIases accelerate the folding of proteins. It catalyzes the cis-trans isomerization of proline imidic peptide bonds in oligopeptides. The chain is Peptidyl-prolyl cis-trans isomerase FKBP1A (Fkbp1a) from Rattus norvegicus (Rat).